A 133-amino-acid chain; its full sequence is Small heat shock protein ibp (133 aa).

Residues Glu-11–Glu-126 form the sHSP domain.

It belongs to the small heat shock protein (HSP20) family.

This Wigglesworthia glossinidia brevipalpis protein is Small heat shock protein ibp (ibp).